A 263-amino-acid chain; its full sequence is HTH-type transcriptional repressor NanR (263 aa).

The disordered stretch occupies residues 1–25; it reads MDVMNAFDSQAEDSPTSLGRSLRRR. Residues 30–98 enclose the HTH gntR-type domain; sequence KKLSEMVEEE…NGERARVSRP (69 aa). Residues 58-77 constitute a DNA-binding region (H-T-H motif); it reads ERELMAFFNVGRPSVREALA.

It belongs to the NanR family.

Its function is as follows. Transcriptional repressor that controls expression of the genes required for the catabolism of sialic acids. In Salmonella schwarzengrund (strain CVM19633), this protein is HTH-type transcriptional repressor NanR.